Reading from the N-terminus, the 299-residue chain is Foldase protein PrsA (299 aa).

The first 19 residues, M1 to A19, serve as a signal peptide directing secretion. C20 carries the N-palmitoyl cysteine lipid modification. C20 is lipidated: S-diacylglycerol cysteine. The PpiC domain maps to N137 to D227.

This sequence belongs to the PrsA family.

The protein resides in the cell membrane. It carries out the reaction [protein]-peptidylproline (omega=180) = [protein]-peptidylproline (omega=0). Its function is as follows. Plays a major role in protein secretion by helping the post-translocational extracellular folding of several secreted proteins. The sequence is that of Foldase protein PrsA from Oceanobacillus iheyensis (strain DSM 14371 / CIP 107618 / JCM 11309 / KCTC 3954 / HTE831).